The chain runs to 266 residues: Ribosomal RNA small subunit methyltransferase A (266 aa).

S-adenosyl-L-methionine-binding residues include Asn13, Leu15, Gly40, Glu61, Asp86, and Asn110.

It belongs to the class I-like SAM-binding methyltransferase superfamily. rRNA adenine N(6)-methyltransferase family. RsmA subfamily.

The protein localises to the cytoplasm. It catalyses the reaction adenosine(1518)/adenosine(1519) in 16S rRNA + 4 S-adenosyl-L-methionine = N(6)-dimethyladenosine(1518)/N(6)-dimethyladenosine(1519) in 16S rRNA + 4 S-adenosyl-L-homocysteine + 4 H(+). Its function is as follows. Specifically dimethylates two adjacent adenosines (A1518 and A1519) in the loop of a conserved hairpin near the 3'-end of 16S rRNA in the 30S particle. May play a critical role in biogenesis of 30S subunits. This Hydrogenovibrio crunogenus (strain DSM 25203 / XCL-2) (Thiomicrospira crunogena) protein is Ribosomal RNA small subunit methyltransferase A.